Here is a 444-residue protein sequence, read N- to C-terminus: ATP-dependent RNA helicase sub2 (444 aa).

The short motif at Thr-59 to Gln-87 is the Q motif element. The Helicase ATP-binding domain occupies Ile-90–Ile-265. Ala-103 to Thr-110 is an ATP binding site. A DECD box motif is present at residues Asp-212–Asp-215. The 162-residue stretch at Gly-277–Ala-438 folds into the Helicase C-terminal domain.

Belongs to the DEAD box helicase family. DECD subfamily.

The protein localises to the nucleus. The catalysed reaction is ATP + H2O = ADP + phosphate + H(+). ATP-binding RNA helicase involved in transcription elongation and required for the export of mRNA out of the nucleus. SUB2 also plays a role in pre-mRNA splicing and spliceosome assembly. May be involved in rDNA and telomeric silencing, and maintenance of genome integrity. The protein is ATP-dependent RNA helicase sub2 (sub2) of Sclerotinia sclerotiorum (strain ATCC 18683 / 1980 / Ss-1) (White mold).